The following is a 468-amino-acid chain: Glutamyl-tRNA reductase (468 aa).

Residues 49 to 52, serine 109, 114 to 116, and glutamine 120 each bind substrate; these read TCNR and EQQ. The active-site Nucleophile is the cysteine 50. Residue 189-194 coordinates NADP(+); sequence GAGAMG. A disordered region spans residues 443 to 468; it reads VPSGFDAESRRGGGDMQSSPKRSPSN. A compositionally biased stretch (polar residues) spans 458–468; sequence MQSSPKRSPSN.

It belongs to the glutamyl-tRNA reductase family. As to quaternary structure, homodimer.

The catalysed reaction is (S)-4-amino-5-oxopentanoate + tRNA(Glu) + NADP(+) = L-glutamyl-tRNA(Glu) + NADPH + H(+). It participates in porphyrin-containing compound metabolism; protoporphyrin-IX biosynthesis; 5-aminolevulinate from L-glutamyl-tRNA(Glu): step 1/2. Its function is as follows. Catalyzes the NADPH-dependent reduction of glutamyl-tRNA(Glu) to glutamate 1-semialdehyde (GSA). The sequence is that of Glutamyl-tRNA reductase from Mycobacterium tuberculosis (strain ATCC 25177 / H37Ra).